The primary structure comprises 395 residues: Alanine racemase 2 (395 aa).

K60 acts as the Proton acceptor; specific for D-alanine in catalysis. K60 carries the N6-(pyridoxal phosphate)lysine modification. Position 158 (R158) interacts with substrate. Catalysis depends on Y288, which acts as the Proton acceptor; specific for L-alanine. M332 provides a ligand contact to substrate.

The protein belongs to the alanine racemase family. Requires pyridoxal 5'-phosphate as cofactor.

It catalyses the reaction L-alanine = D-alanine. The protein operates within amino-acid biosynthesis; D-alanine biosynthesis; D-alanine from L-alanine: step 1/1. Functionally, catalyzes the interconversion of L-alanine and D-alanine. May also act on other amino acids. The chain is Alanine racemase 2 (alr2) from Clostridium acetobutylicum (strain ATCC 824 / DSM 792 / JCM 1419 / IAM 19013 / LMG 5710 / NBRC 13948 / NRRL B-527 / VKM B-1787 / 2291 / W).